The chain runs to 207 residues: Dephospho-CoA kinase (207 aa).

Residues 10–207 (ILGLTGGIGS…FYLTLRGGQS (198 aa)) enclose the DPCK domain. Position 18 to 23 (18 to 23 (GSGKSA)) interacts with ATP.

The protein belongs to the CoaE family.

Its subcellular location is the cytoplasm. The enzyme catalyses 3'-dephospho-CoA + ATP = ADP + CoA + H(+). The protein operates within cofactor biosynthesis; coenzyme A biosynthesis; CoA from (R)-pantothenate: step 5/5. Catalyzes the phosphorylation of the 3'-hydroxyl group of dephosphocoenzyme A to form coenzyme A. The protein is Dephospho-CoA kinase of Pseudomonas syringae pv. tomato (strain ATCC BAA-871 / DC3000).